A 72-amino-acid chain; its full sequence is Rubredoxin in uptake hydrogenase operon (72 aa).

A Rubredoxin-like domain is found at 19 to 70; sequence DAVLECKICWHRYDPAVGDEVWQILAGTPFAALPAHWRCPQCDGDREQFMVV. Fe cation is bound by residues cysteine 24, cysteine 27, cysteine 57, and cysteine 60.

Belongs to the rubredoxin family. The cofactor is Fe(3+).

Functionally, could be an electron transport intermediate in hydrogen oxidation. The sequence is that of Rubredoxin in uptake hydrogenase operon (hupR) from Azotobacter chroococcum mcd 1.